The chain runs to 491 residues: Ketol-acid reductoisomerase (NADP(+)) (491 aa).

In terms of domain architecture, KARI N-terminal Rossmann spans 15 to 208 (AQLGKCRFMG…GGHRAGVLES (194 aa)). Residues 45 to 48 (CGAQ), R68, R76, S78, and 108 to 110 (DKQ) each bind NADP(+). The active site involves H132. Residue G158 coordinates NADP(+). 2 KARI C-terminal knotted domains span residues 209 to 344 (SFVA…TAPQ) and 345 to 484 (YEGK…MTDM). Mg(2+)-binding residues include D217, E221, E389, and E393. S414 provides a ligand contact to substrate.

It belongs to the ketol-acid reductoisomerase family. Mg(2+) serves as cofactor.

The catalysed reaction is (2R)-2,3-dihydroxy-3-methylbutanoate + NADP(+) = (2S)-2-acetolactate + NADPH + H(+). It catalyses the reaction (2R,3R)-2,3-dihydroxy-3-methylpentanoate + NADP(+) = (S)-2-ethyl-2-hydroxy-3-oxobutanoate + NADPH + H(+). It participates in amino-acid biosynthesis; L-isoleucine biosynthesis; L-isoleucine from 2-oxobutanoate: step 2/4. The protein operates within amino-acid biosynthesis; L-valine biosynthesis; L-valine from pyruvate: step 2/4. Involved in the biosynthesis of branched-chain amino acids (BCAA). Catalyzes an alkyl-migration followed by a ketol-acid reduction of (S)-2-acetolactate (S2AL) to yield (R)-2,3-dihydroxy-isovalerate. In the isomerase reaction, S2AL is rearranged via a Mg-dependent methyl migration to produce 3-hydroxy-3-methyl-2-ketobutyrate (HMKB). In the reductase reaction, this 2-ketoacid undergoes a metal-dependent reduction by NADPH to yield (R)-2,3-dihydroxy-isovalerate. This chain is Ketol-acid reductoisomerase (NADP(+)), found in Salmonella typhimurium (strain LT2 / SGSC1412 / ATCC 700720).